A 542-amino-acid chain; its full sequence is Chaperonin GroEL (542 aa).

ATP contacts are provided by residues 29 to 32 (TLGP), K50, 86 to 90 (DGTTT), G415, and D495.

Belongs to the chaperonin (HSP60) family. Forms a cylinder of 14 subunits composed of two heptameric rings stacked back-to-back. Interacts with the co-chaperonin GroES.

The protein localises to the cytoplasm. It carries out the reaction ATP + H2O + a folded polypeptide = ADP + phosphate + an unfolded polypeptide.. Together with its co-chaperonin GroES, plays an essential role in assisting protein folding. The GroEL-GroES system forms a nano-cage that allows encapsulation of the non-native substrate proteins and provides a physical environment optimized to promote and accelerate protein folding. This Flavobacterium psychrophilum (strain ATCC 49511 / DSM 21280 / CIP 103535 / JIP02/86) protein is Chaperonin GroEL.